The sequence spans 343 residues: tRNA N6-adenosine threonylcarbamoyltransferase (343 aa).

Fe cation-binding residues include H111 and H115. Substrate is bound by residues 134–138 (LVSGG), D167, G180, and N276. D304 contacts Fe cation.

Belongs to the KAE1 / TsaD family. Fe(2+) serves as cofactor.

It is found in the cytoplasm. The enzyme catalyses L-threonylcarbamoyladenylate + adenosine(37) in tRNA = N(6)-L-threonylcarbamoyladenosine(37) in tRNA + AMP + H(+). Its function is as follows. Required for the formation of a threonylcarbamoyl group on adenosine at position 37 (t(6)A37) in tRNAs that read codons beginning with adenine. Is involved in the transfer of the threonylcarbamoyl moiety of threonylcarbamoyl-AMP (TC-AMP) to the N6 group of A37, together with TsaE and TsaB. TsaD likely plays a direct catalytic role in this reaction. The polypeptide is tRNA N6-adenosine threonylcarbamoyltransferase (Chromohalobacter salexigens (strain ATCC BAA-138 / DSM 3043 / CIP 106854 / NCIMB 13768 / 1H11)).